A 377-amino-acid chain; its full sequence is Phospho-N-acetylmuramoyl-pentapeptide-transferase (377 aa).

11 consecutive transmembrane segments (helical) span residues 9-29 (YITL…LVAG), 62-82 (MGGA…ADWI), 85-105 (FVWV…MDDY), 122-142 (FFWQ…AVSA), 155-175 (WVGS…VPFF), 178-198 (VSYP…IVGT), 210-230 (GLAI…AYVV), 247-267 (AAEL…FLWF), 274-294 (VFMG…IAVI), 299-319 (IVLF…MVQV), and 354-374 (QVVV…LSTL).

This sequence belongs to the glycosyltransferase 4 family. MraY subfamily. The cofactor is Mg(2+).

The protein resides in the cell inner membrane. It catalyses the reaction UDP-N-acetyl-alpha-D-muramoyl-L-alanyl-gamma-D-glutamyl-meso-2,6-diaminopimeloyl-D-alanyl-D-alanine + di-trans,octa-cis-undecaprenyl phosphate = di-trans,octa-cis-undecaprenyl diphospho-N-acetyl-alpha-D-muramoyl-L-alanyl-D-glutamyl-meso-2,6-diaminopimeloyl-D-alanyl-D-alanine + UMP. The protein operates within cell wall biogenesis; peptidoglycan biosynthesis. Functionally, catalyzes the initial step of the lipid cycle reactions in the biosynthesis of the cell wall peptidoglycan: transfers peptidoglycan precursor phospho-MurNAc-pentapeptide from UDP-MurNAc-pentapeptide onto the lipid carrier undecaprenyl phosphate, yielding undecaprenyl-pyrophosphoryl-MurNAc-pentapeptide, known as lipid I. The sequence is that of Phospho-N-acetylmuramoyl-pentapeptide-transferase from Bordetella parapertussis (strain 12822 / ATCC BAA-587 / NCTC 13253).